The following is a 233-amino-acid chain: Phosphoglycolate phosphatase (233 aa).

The active-site Nucleophile is the Asp-13. Residues Asp-13, Asp-15, and Asp-175 each coordinate Mg(2+).

It belongs to the HAD-like hydrolase superfamily. CbbY/CbbZ/Gph/YieH family. The cofactor is Mg(2+).

It carries out the reaction 2-phosphoglycolate + H2O = glycolate + phosphate. It functions in the pathway organic acid metabolism; glycolate biosynthesis; glycolate from 2-phosphoglycolate: step 1/1. Specifically catalyzes the dephosphorylation of 2-phosphoglycolate. Is involved in the dissimilation of the intracellular 2-phosphoglycolate formed during the DNA repair of 3'-phosphoglycolate ends, a major class of DNA lesions induced by oxidative stress. This Agrobacterium fabrum (strain C58 / ATCC 33970) (Agrobacterium tumefaciens (strain C58)) protein is Phosphoglycolate phosphatase.